We begin with the raw amino-acid sequence, 95 residues long: Histone-like DNA-binding protein (95 aa).

The protein belongs to the bacterial histone-like protein family.

The polypeptide is Histone-like DNA-binding protein (Rickettsia conorii (strain ATCC VR-613 / Malish 7)).